Consider the following 209-residue polypeptide: Cytochrome bo(3) ubiquinol oxidase subunit 3 (209 aa).

The Cytoplasmic segment spans residues 1 to 29 (MSTAVLNKHLADAHEVGHDHDHAHDSGGN). A helical transmembrane segment spans residues 30-50 (TVFGFWLYLMTDCVLFASVFA). At 51 to 72 (TYAVLVHHTAGGPSGKDIFELP) the chain is on the periplasmic side. Residues 73–93 (YVLVETAILLVSSCTYGLAML) form a helical membrane-spanning segment. Over 94–102 (SAHKGAKGQ) the chain is Cytoplasmic. A helical transmembrane segment spans residues 103 to 123 (AIAWLGVTFLLGAAFIGMEIN). Residues 124–143 (EFHHLIAEGFGPSRSAFLSS) lie on the Periplasmic side of the membrane. A helical membrane pass occupies residues 144-164 (FFTLVGMHGLHVSAGLLWMLV). The Cytoplasmic segment spans residues 165–186 (LMAQIWTRGLTAQNNTRMMCLS). A helical transmembrane segment spans residues 187–207 (LFWHFLDIVWICVFTVVYLMG). Over 208–209 (AL) the chain is Periplasmic.

The protein belongs to the cytochrome c oxidase subunit 3 family. As to quaternary structure, heterooctamer of two A chains, two B chains, two C chains and two D chains.

The protein resides in the cell inner membrane. Functionally, cytochrome bo(3) ubiquinol terminal oxidase is the component of the aerobic respiratory chain of E.coli that predominates when cells are grown at high aeration. Has proton pump activity across the membrane in addition to electron transfer, pumping 2 protons/electron. The protein is Cytochrome bo(3) ubiquinol oxidase subunit 3 (cyoC) of Pseudomonas aeruginosa (strain ATCC 15692 / DSM 22644 / CIP 104116 / JCM 14847 / LMG 12228 / 1C / PRS 101 / PAO1).